Here is a 379-residue protein sequence, read N- to C-terminus: MPYSNLHPSIPRPRSYRFKLAAFVLLVGSLMSLWMTGEPPSHTLHYLALHVASQQLGLLLKKLCCLAEELCHVQSRYQGSYWKAVRACVGSPICFMALILLSFYFYCSLENTSDLRLAWHLGILVLSKSLSMTLDLQSLAPAEVSAVCEEKNFNVAHGLAWSYYIGYLKLILPGLQARIRMFNQLHNNMLSGAGSRRLYILFPLDCGVPDDLSVADPNIRFRDMLPQQNTDRAGVKNRAYSNSVYELLENGQPAGACILEYATPLQTLFAMSQDGKAGFSREDRLEQAKLFCRTLEEILADVPESRNHCRLIVYQESEEGNSFSLSQEVLRHIRQEEKEEVTMSGPPTSVAPRPSLLSQEPRLLISGMEQPLPLRTDLI.

The Cytoplasmic segment spans residues M1–R17. A mediates interaction with ZDHHC1 and ZDHHC11 region spans residues M1–L190. A helical membrane pass occupies residues F18–W34. The Lumenal portion of the chain corresponds to M35–L44. A helical transmembrane segment spans residues H45–E69. Over L70 to S91 the chain is Cytoplasmic. C88 carries the S-palmitoyl cysteine lipid modification. A helical transmembrane segment spans residues P92 to Y106. The Lumenal portion of the chain corresponds to C107 to R116. Residues L117–L134 form a helical membrane-spanning segment. Over D135 to I379 the chain is Cytoplasmic. A Glycyl lysine isopeptide (Lys-Gly) (interchain with G-Cter in ubiquitin) cross-link involves residue K151. The tract at residues F153–E340 is cyclic dinucleotide-binding domain (CBD). S162–Y167 contributes to the 2',3'-cGAMP binding site. Residue G166 coordinates 3',3'-c-di-GMP. Residue Y167 participates in 2',3'-cUAMP binding. A Glycyl lysine isopeptide (Lys-Gly) (interchain with G-Cter in ubiquitin) cross-link involves residue K236. Residue R238 participates in 2',3'-cUAMP binding. 2',3'-cGAMP-binding positions include R238–S241 and T263. 3',3'-c-di-GMP contacts are provided by residues R238 to S241 and T263. A Phosphoserine modification is found at S241. A 2',3'-cUAMP-binding site is contributed by T263. A Glycyl lysine isopeptide (Lys-Gly) (interchain with G-Cter in SUMO) cross-link involves residue K338. Positions E340–I379 are C-terminal tail (CTT). The residue at position 355 (S355) is a Phosphoserine. A phosphoserine; by TBK1 mark is found at S358 and S366. The pLxIS motif signature appears at L363–S366.

The protein belongs to the STING family. As to quaternary structure, homodimer; forms a homodimer in absence of cyclic nucleotide (c-di-GMP or cGAMP); 'Lys-63'-linked ubiquitination at Lys-151 is required for homodimerization. Homotetramer; in presence of cyclic nucleotide (c-di-GMP or cGAMP), forms tetramers and higher-order oligomers through side-by-side packing. Interacts (when phosphorylated) with IRF3; following activation and phosphorylation on the pLxIS motif by TBK1, recruits IRF3. Interacts with RIGI, MAVS and SSR2. Interacts with RNF5 and TRIM56. Interacts with TBK1; when homodimer, leading to subsequent production of IFN-beta. Interacts with IFIT1 and IFIT2. Interacts with TRIM29; this interaction induces STING1 ubiquitination and subsequent degradation. Associates with the MHC-II complex. Interacts with STEEP1; interaction takes place upon cGAMP-activation and STING1 phosphorylation by MAP3K7/TAK1 and promotes STING1 translocation to COPII vesicles. Interacts with SEC24A, SEC24B and SEC24C; promoting translocation to COPII vesicles. Interacts (when ubiquitinated) with SQSTM1; leading to relocalization to autophagosomes. Interacts with SURF4. Interacts with HNRNPA2B1. Interacts with ZDHHC1; ZDHHC1 constitutively interacts with STING1 and in presence of DNA viruses activates it by promoting its cGAMP-induced oligomerization and the recruitment of downstream signaling components. Interacts with ZDHHC11; in presence of DNA viruses promotes the recruitment of IRF3 to STING1. Interacts with TOMM70. Interacts with TAB1; promoting recruitment of TAB1 to the endoplasmic reticulum membrane and subsequent activation of MAP3K7/TAK1. Interacts (via transmembrane domain) with TMEM203. Interacts with DDX41. Post-translationally, phosphorylation by TBK1 leads to activation and production of IFN-beta. Following cyclic nucleotide (c-di-GMP or cGAMP)-binding, activation and translocation from the endoplasmic reticulum, STING1 is phosphorylated by TBK1 at Ser-366 in the pLxIS motif. The phosphorylated pLxIS motif constitutes an IRF3-binding motif, leading to recruitment of the transcription factor IRF3 to induce type-I interferons and other cytokines. Phosphorylated on tyrosine residues upon MHC-II aggregation. Dephosphorylation by PPP6C leads to inactivation and decreased production of IFN-beta. Phosphorylation at Ser-358 is also required to activate IRF3. Phosphorylation at Ser-355 by MAP3K7/TAK1 facilitates its interaction with STEEP1, promoting STING1 translocation to COPII vesicles. In terms of processing, ubiquitinated. Ubiquitinated via 'Lys-63'-linked ubiquitin chains in response to double-stranded DNA treatment, leading to relocalization to autophagosomes and subsequent degradation; this process is dependent on SQSTM1. 'Lys-63'-linked ubiquitination mediated by TRIM56 at Lys-151 promotes homodimerization and recruitment of the antiviral kinase TBK1 and subsequent production of IFN-beta. 'Lys-48'-linked polyubiquitination at Lys-151 occurring after viral infection is mediated by RNF5 and leads to proteasomal degradation. 'Lys-11'-linked polyubiquitination at Lys-151 by RNF26 leads to stabilize STING1: it protects STING1 from RNF5-mediated 'Lys-48'-linked polyubiquitination. 'Lys-33'-linked and 'Lys-48'-linked deubiquitinated by USP20; leading to its stabilization and promotion of innate antiviral response. 'Lys-48'-linked deubiquitinated by USP44; leading to its stabilization and promotion of innate antiviral response. Deubiquitinated by USP13; leading to inhibition of innate antiviral response. 'Lys-63'-linked deubiquitinated by USP49; leading to inhibition of the subsequent recruitment of TBK1 to the signaling complex. 'Lys-63'-linked ubiquitination mediated by RNF39 promotes the activation of the cGAS-STING pathway. Sumoylated at Lys-338 by TRIM38 during the early phase of viral infection, promoting its stability by preventing its relocalization to autophagosomes and subsequent degradation. Desumoylated by SENP2 during the late phase of viral infection. Post-translationally, palmitoylation takes place in the Golgi apparatus and creates a platform for the recruitment of TBK1.

Its subcellular location is the endoplasmic reticulum membrane. It is found in the cytoplasm. It localises to the perinuclear region. The protein localises to the endoplasmic reticulum-Golgi intermediate compartment membrane. The protein resides in the golgi apparatus membrane. Its subcellular location is the cytoplasmic vesicle. It is found in the autophagosome membrane. It localises to the mitochondrion outer membrane. The protein localises to the cell membrane. It catalyses the reaction H(+)(in) = H(+)(out). With respect to regulation, in contrast to mouse protein, not activated by anticancer molecule 5,6-dimethylxanthenone 4-acetic acid (DMXAA). Its function is as follows. Facilitator of innate immune signaling that acts as a sensor of cytosolic DNA from bacteria and viruses and promotes the production of type I interferon (IFN-alpha and IFN-beta). Innate immune response is triggered in response to non-CpG double-stranded DNA from viruses and bacteria delivered to the cytoplasm. Acts by binding cyclic dinucleotides: recognizes and binds cyclic di-GMP (c-di-GMP), a second messenger produced by bacteria, cyclic UMP-AMP (2',3'-cUAMP), and cyclic GMP-AMP (cGAMP), a messenger produced by CGAS in response to DNA virus in the cytosol. Upon binding to c-di-GMP, cUAMP or cGAMP, STING1 oligomerizes, translocates from the endoplasmic reticulum and is phosphorylated by TBK1 on the pLxIS motif, leading to recruitment and subsequent activation of the transcription factor IRF3 to induce expression of type I interferon and exert a potent anti-viral state. Exhibits 2',3' phosphodiester linkage-specific ligand recognition: can bind both 2'-3' linked cGAMP (2'-3'-cGAMP) and 3'-3' linked cGAMP but is preferentially activated by 2'-3' linked cGAMP. The preference for 2'-3'-cGAMP, compared to other linkage isomers is probably due to the ligand itself, whichs adopts an organized free-ligand conformation that resembles the STING1-bound conformation and pays low energy costs in changing into the active conformation. In addition to promote the production of type I interferons, plays a direct role in autophagy. Following cGAMP-binding, STING1 buds from the endoplasmic reticulum into COPII vesicles, which then form the endoplasmic reticulum-Golgi intermediate compartment (ERGIC). The ERGIC serves as the membrane source for WIPI2 recruitment and LC3 lipidation, leading to formation of autophagosomes that target cytosolic DNA or DNA viruses for degradation by the lysosome. Promotes autophagy by acting as a proton channel that directs proton efflux from the Golgi to facilitate MAP1LC3B/LC3B lipidation. The autophagy- and interferon-inducing activities can be uncoupled and autophagy induction is independent of TBK1 phosphorylation. Autophagy is also triggered upon infection by bacteria: following c-di-GMP-binding, which is produced by live Gram-positive bacteria, promotes reticulophagy. May be involved in translocon function, the translocon possibly being able to influence the induction of type I interferons. May be involved in transduction of apoptotic signals via its association with the major histocompatibility complex class II (MHC-II). In Rattus norvegicus (Rat), this protein is Stimulator of interferon genes protein.